Here is a 602-residue protein sequence, read N- to C-terminus: Aspartate--tRNA(Asp/Asn) ligase (602 aa).

Glu-187 serves as a coordination point for L-aspartate. The tract at residues 211–214 (QQFK) is aspartate. The L-aspartate site is built by Arg-233 and His-461. 233–235 (RDE) lines the ATP pocket. Position 495 (Glu-495) interacts with ATP. Residue Arg-502 participates in L-aspartate binding. Residue 547 to 550 (GLDR) participates in ATP binding.

This sequence belongs to the class-II aminoacyl-tRNA synthetase family. Type 1 subfamily. Homodimer.

It localises to the cytoplasm. It carries out the reaction tRNA(Asx) + L-aspartate + ATP = L-aspartyl-tRNA(Asx) + AMP + diphosphate. In terms of biological role, aspartyl-tRNA synthetase with relaxed tRNA specificity since it is able to aspartylate not only its cognate tRNA(Asp) but also tRNA(Asn). Reaction proceeds in two steps: L-aspartate is first activated by ATP to form Asp-AMP and then transferred to the acceptor end of tRNA(Asp/Asn). This is Aspartate--tRNA(Asp/Asn) ligase from Chlorobium phaeovibrioides (strain DSM 265 / 1930) (Prosthecochloris vibrioformis (strain DSM 265)).